A 285-amino-acid chain; its full sequence is Protease HtpX homolog (285 aa).

Transmembrane regions (helical) follow at residues 7–27 (TAMLMAAITALFIVIGGMIGG) and 30–50 (GMTIALLFALGMNFFSYWFSD). A Zn(2+)-binding site is contributed by H131. E132 is a catalytic residue. H135 serves as a coordination point for Zn(2+). Helical transmembrane passes span 146–166 (ITATMAGAISALANFAMFFGG) and 177–197 (IAGIAVALLAPIAGALIQMAI). E202 provides a ligand contact to Zn(2+).

The protein belongs to the peptidase M48B family. Zn(2+) serves as cofactor.

Its subcellular location is the cell inner membrane. The protein is Protease HtpX homolog of Burkholderia cenocepacia (strain HI2424).